Reading from the N-terminus, the 255-residue chain is tRNA (guanine-N(7)-)-methyltransferase (255 aa).

Residues methionine 1 to asparagine 30 are disordered. The segment covering alanine 17–aspartate 27 has biased composition (acidic residues). The S-adenosyl-L-methionine site is built by glutamate 86, glutamate 111, aspartate 138, and aspartate 161. The active site involves aspartate 161. Substrate is bound by residues lysine 165, aspartate 197, and threonine 232–glutamate 235.

The protein belongs to the class I-like SAM-binding methyltransferase superfamily. TrmB family.

The catalysed reaction is guanosine(46) in tRNA + S-adenosyl-L-methionine = N(7)-methylguanosine(46) in tRNA + S-adenosyl-L-homocysteine. Its pathway is tRNA modification; N(7)-methylguanine-tRNA biosynthesis. In terms of biological role, catalyzes the formation of N(7)-methylguanine at position 46 (m7G46) in tRNA. In Burkholderia vietnamiensis (strain G4 / LMG 22486) (Burkholderia cepacia (strain R1808)), this protein is tRNA (guanine-N(7)-)-methyltransferase.